The sequence spans 43 residues: Protein PsbN (43 aa).

The helical transmembrane segment at 5–27 (TLVAISISGLLVSFTGYALYTAF) threads the bilayer.

This sequence belongs to the PsbN family.

It localises to the plastid. The protein localises to the chloroplast thylakoid membrane. Its function is as follows. May play a role in photosystem I and II biogenesis. In Houttuynia cordata (Chameleon plant), this protein is Protein PsbN.